The sequence spans 182 residues: Urease accessory protein UreE (182 aa).

Positions 128 to 182 (PRTEPFRPEGGAYGHGRTLGHDHGPAQGHGHDHPHVHVHISHKPDEDETPDADPA) are disordered. Basic and acidic residues predominate over residues 146 to 162 (LGHDHGPAQGHGHDHPH). The segment covering 173-182 (EDETPDADPA) has biased composition (acidic residues).

This sequence belongs to the UreE family.

It is found in the cytoplasm. Its function is as follows. Involved in urease metallocenter assembly. Binds nickel. Probably functions as a nickel donor during metallocenter assembly. This is Urease accessory protein UreE from Cereibacter sphaeroides (strain ATCC 17023 / DSM 158 / JCM 6121 / CCUG 31486 / LMG 2827 / NBRC 12203 / NCIMB 8253 / ATH 2.4.1.) (Rhodobacter sphaeroides).